The primary structure comprises 414 residues: HERV-H LTR-associating protein 2 (414 aa).

A signal peptide spans 1 to 22 (MKAQTALSFFLILITSLSGSQG). The Ig-like V-type 1 domain occupies 61 to 131 (IHWKYQDSYK…YVGTAIQVIT (71 aa)). N-linked (GlcNAc...) asparagine glycans are attached at residues Asn-90 and Asn-103. Positions 138–222 (VGVFLTPVMK…ENSLLKQTWT (85 aa)) constitute an Ig-like C1-type domain. 2 disulfide bridges follow: Cys-159–Cys-210 and Cys-243–Cys-317. Positions 235–328 (QSEHVSLSCQ…ISSDEYTLLT (94 aa)) constitute an Ig-like V-type 2 domain. The N-linked (GlcNAc...) asparagine glycan is linked to Asn-318. The chain crosses the membrane as a helical span at residues 345-365 (KGLWILVPSAILAAFLLIWSV). Residues 383–414 (GAQQERCCVPPGERCPSAPDNGEENVPLSGKV) are disordered.

As to quaternary structure, interacts with TMIGD2. Expressed at high levels in colon, kidney, testis, lung and pancreas, and at lower levels in small intestine, liver and skeletal muscle. In immune cells, highly expressed in B-cells, dendritic cells and macrophages. Not detected in T-cells.

The protein localises to the membrane. Functionally, through interaction with TMIGD2, costimulates T-cells in the context of TCR-mediated activation. Enhances T-cell proliferation and cytokine production via an AKT-dependent signaling cascade. The protein is HERV-H LTR-associating protein 2 (HHLA2) of Homo sapiens (Human).